The primary structure comprises 125 residues: Large-conductance mechanosensitive channel (125 aa).

A run of 2 helical transmembrane segments spans residues 14-34 (VIDLAVGVIIGAAFTAIVQSL) and 67-87 (GSFLNSIINFLIISFIVFLIV).

Belongs to the MscL family. Homopentamer.

It is found in the cell membrane. Its function is as follows. Channel that opens in response to stretch forces in the membrane lipid bilayer. May participate in the regulation of osmotic pressure changes within the cell. The sequence is that of Large-conductance mechanosensitive channel from Lactobacillus helveticus (strain DPC 4571).